A 262-amino-acid chain; its full sequence is Type III pantothenate kinase (262 aa).

Position 9–16 (9–16 (DSGNTRVK)) interacts with ATP. Substrate is bound by residues Y93 and 100–103 (GSDR). D102 functions as the Proton acceptor in the catalytic mechanism. Residue D122 coordinates K(+). T125 is a binding site for ATP. Residue T175 coordinates substrate.

Belongs to the type III pantothenate kinase family. In terms of assembly, homodimer. It depends on NH4(+) as a cofactor. K(+) serves as cofactor.

The protein resides in the cytoplasm. The catalysed reaction is (R)-pantothenate + ATP = (R)-4'-phosphopantothenate + ADP + H(+). It participates in cofactor biosynthesis; coenzyme A biosynthesis; CoA from (R)-pantothenate: step 1/5. In terms of biological role, catalyzes the phosphorylation of pantothenate (Pan), the first step in CoA biosynthesis. The protein is Type III pantothenate kinase of Nitrosospira multiformis (strain ATCC 25196 / NCIMB 11849 / C 71).